A 329-amino-acid chain; its full sequence is Malate dehydrogenase (329 aa).

G12 to C18 contributes to the NAD(+) binding site. R95 and R101 together coordinate substrate. NAD(+) contacts are provided by residues N108, Q115, and V132–N134. 2 residues coordinate substrate: N134 and R165. Residue H190 is the Proton acceptor of the active site.

Belongs to the LDH/MDH superfamily. MDH type 2 family. In terms of assembly, homodimer.

It catalyses the reaction (S)-malate + NAD(+) = oxaloacetate + NADH + H(+). In terms of biological role, catalyzes the reversible oxidation of malate to oxaloacetate. In Aquaspirillum arcticum, this protein is Malate dehydrogenase.